Here is a 93-residue protein sequence, read N- to C-terminus: Integration host factor subunit beta (93 aa).

Residues 59 to 93 form a disordered region; sequence RVGRNPKTGQSVSLDGKFVPHFKPGKELRDRVNDD. Residues 82 to 93 show a composition bias toward basic and acidic residues; that stretch reads PGKELRDRVNDD.

It belongs to the bacterial histone-like protein family. Heterodimer of an alpha and a beta chain.

This protein is one of the two subunits of integration host factor, a specific DNA-binding protein that functions in genetic recombination as well as in transcriptional and translational control. The sequence is that of Integration host factor subunit beta from Stutzerimonas stutzeri (strain A1501) (Pseudomonas stutzeri).